A 372-amino-acid chain; its full sequence is D-alanine--D-alanine ligase (372 aa).

In terms of domain architecture, ATP-grasp spans 145–349 (KTVLRAGGIP…CPNLLDQLIE (205 aa)). 176-231 (DRWGTSELFVKAVSLGSSVATLPVKTETEFTKAVKEVFRYDDRLMVEPRIRGREIE) serves as a coordination point for ATP. Residues Asp-303, Glu-316, and Asn-318 each coordinate Mg(2+).

It belongs to the D-alanine--D-alanine ligase family. Requires Mg(2+) as cofactor. The cofactor is Mn(2+).

It localises to the cytoplasm. It carries out the reaction 2 D-alanine + ATP = D-alanyl-D-alanine + ADP + phosphate + H(+). Its pathway is cell wall biogenesis; peptidoglycan biosynthesis. Cell wall formation. The sequence is that of D-alanine--D-alanine ligase from Coxiella burnetii (strain Dugway 5J108-111).